A 357-amino-acid polypeptide reads, in one-letter code: CD4+ T-cell-stimulating antigen (357 aa).

Positions 1 to 22 are cleaved as a signal peptide; sequence MKKRTFALALSMIIASGVVLGA. A lipid anchor (N-palmitoyl cysteine) is attached at C23. The S-diacylglycerol cysteine moiety is linked to residue C23.

The protein belongs to the BMP lipoprotein family.

It is found in the cell membrane. The protein is CD4+ T-cell-stimulating antigen (tcsA) of Listeria innocua serovar 6a (strain ATCC BAA-680 / CLIP 11262).